Consider the following 253-residue polypeptide: Large ribosomal subunit protein uL10m (253 aa).

A mitochondrion-targeting transit peptide spans 1 to 24 (MANLMQRSLPLTTTRTPVLQFLRF).

The protein belongs to the universal ribosomal protein uL10 family. In terms of assembly, component of the mitochondrial ribosome large subunit (39S) which comprises a 16S rRNA and about 50 distinct proteins.

It is found in the mitochondrion. The sequence is that of Large ribosomal subunit protein uL10m (mRpL10) from Drosophila pseudoobscura pseudoobscura (Fruit fly).